Here is a 215-residue protein sequence, read N- to C-terminus: MKTVLITAFEPFEGEAINPSWEAVKVLHQREVGGARVVACRLSCVFDLSLEELYRAIAEWQPEVVIAVGQAGGRTDISVERVAININDARIADNRGNQPIDTPIVEKGPAAYFSTLPVKALVQALRVAGIPASVSQTAGTFVCNHVMYGLLHQLHQQGDVVRGGFVHIPYSPEQAARHPGEPSMPTPLVTAALEVMIKQSLAQQVDVAVTGGALH.

Active-site residues include E80, C143, and H167.

The protein belongs to the peptidase C15 family. In terms of assembly, homotetramer.

It localises to the cytoplasm. The enzyme catalyses Release of an N-terminal pyroglutamyl group from a polypeptide, the second amino acid generally not being Pro.. Functionally, removes 5-oxoproline from various penultimate amino acid residues except L-proline. The chain is Pyrrolidone-carboxylate peptidase from Pectobacterium carotovorum subsp. carotovorum (strain PC1).